Consider the following 118-residue polypeptide: Large ribosomal subunit protein uL18 (118 aa).

It belongs to the universal ribosomal protein uL18 family. Part of the 50S ribosomal subunit; part of the 5S rRNA/L5/L18/L25 subcomplex. Contacts the 5S and 23S rRNAs.

Functionally, this is one of the proteins that bind and probably mediate the attachment of the 5S RNA into the large ribosomal subunit, where it forms part of the central protuberance. This is Large ribosomal subunit protein uL18 from Rickettsia akari (strain Hartford).